The sequence spans 445 residues: NADH-quinone oxidoreductase subunit F (445 aa).

61-70 (GRGGAGFSTG) serves as a coordination point for NAD(+). 174-221 (GAGRYICGEETALINSLEGRRANPRSKPPFPATSGAWGKPTCVNNVET) provides a ligand contact to FMN. Positions 351, 354, 357, and 398 each coordinate [4Fe-4S] cluster.

This sequence belongs to the complex I 51 kDa subunit family. Composed of 13 different subunits. Subunits NuoCD, E, F, and G constitute the peripheral sector of the complex. FMN serves as cofactor. Requires [4Fe-4S] cluster as cofactor.

It catalyses the reaction a quinone + NADH + 5 H(+)(in) = a quinol + NAD(+) + 4 H(+)(out). Its function is as follows. NDH-1 shuttles electrons from NADH, via FMN and iron-sulfur (Fe-S) centers, to quinones in the respiratory chain. The immediate electron acceptor for the enzyme in this species is believed to be ubiquinone. Couples the redox reaction to proton translocation (for every two electrons transferred, four hydrogen ions are translocated across the cytoplasmic membrane), and thus conserves the redox energy in a proton gradient. The chain is NADH-quinone oxidoreductase subunit F (nuoF) from Escherichia coli (strain K12).